The following is a 63-amino-acid chain: uncharacterized protein (63 aa).

This is an uncharacterized protein from Thermoproteus tenax virus 1 (strain KRA1) (TTV1).